The following is a 144-amino-acid chain: uncharacterized protein (144 aa).

Residues M1–S22 form the signal peptide.

This is an uncharacterized protein from Saccharomyces cerevisiae (strain ATCC 204508 / S288c) (Baker's yeast).